We begin with the raw amino-acid sequence, 461 residues long: General transcription and DNA repair factor IIH subunit SSL1 (461 aa).

The disordered stretch occupies residues 1-70; sequence MAPVVISESE…RLSNRNLQGS (70 aa). A compositionally biased stretch (basic and acidic residues) spans 26–37; it reads VHFDGEGDDRVD. The segment covering 53–63 has biased composition (basic residues); that stretch reads HVQRKKKKRLS. The VWFA domain occupies 125 to 304; it reads SLILTLDCSE…THLKELFNEA (180 aa). The segment at 349-366 adopts a C4-type zinc-finger fold; it reads CPNCHSKVCSLPTVCPCC.

Belongs to the GTF2H2 family. As to quaternary structure, component of the 7-subunit TFIIH core complex composed of XPB/SSL2, XPD/RAD3, SSL1, TFB1, TFB2, TFB4 and TFB5, which is active in NER. The core complex associates with the 3-subunit CTD-kinase module TFIIK composed of CCL1, KIN28 and TFB3 to form the 10-subunit holoenzyme (holo-TFIIH) active in transcription. An additionnal subunit, TFB6, plays a role in the dissociation of the SSL2 helicase from TFIIH after transcription initiation.

Its subcellular location is the nucleus. Component of the general transcription and DNA repair factor IIH (TFIIH) core complex, which is involved in general and transcription-coupled nucleotide excision repair (NER) of damaged DNA and, when complexed to TFIIK, in RNA transcription by RNA polymerase II. In NER, TFIIH acts by opening DNA around the lesion to allow the excision of the damaged oligonucleotide and its replacement by a new DNA fragment. In transcription, TFIIH has an essential role in transcription initiation. When the pre-initiation complex (PIC) has been established, TFIIH is required for promoter opening and promoter escape. Phosphorylation of the C-terminal tail (CTD) of the largest subunit of RNA polymerase II by the kinase module TFIIK controls the initiation of transcription. This is General transcription and DNA repair factor IIH subunit SSL1 (SSL1) from Saccharomyces cerevisiae (strain ATCC 204508 / S288c) (Baker's yeast).